We begin with the raw amino-acid sequence, 154 residues long: 6,7-dimethyl-8-ribityllumazine synthase (154 aa).

5-amino-6-(D-ribitylamino)uracil-binding positions include Phe-22, 56-58, and 80-82; these read AFE and AVI. 85 to 86 contributes to the (2S)-2-hydroxy-3-oxobutyl phosphate binding site; it reads AT. The active-site Proton donor is His-88. Position 113 (Phe-113) interacts with 5-amino-6-(D-ribitylamino)uracil. A (2S)-2-hydroxy-3-oxobutyl phosphate-binding site is contributed by Arg-127.

It belongs to the DMRL synthase family.

It carries out the reaction (2S)-2-hydroxy-3-oxobutyl phosphate + 5-amino-6-(D-ribitylamino)uracil = 6,7-dimethyl-8-(1-D-ribityl)lumazine + phosphate + 2 H2O + H(+). Its pathway is cofactor biosynthesis; riboflavin biosynthesis; riboflavin from 2-hydroxy-3-oxobutyl phosphate and 5-amino-6-(D-ribitylamino)uracil: step 1/2. In terms of biological role, catalyzes the formation of 6,7-dimethyl-8-ribityllumazine by condensation of 5-amino-6-(D-ribitylamino)uracil with 3,4-dihydroxy-2-butanone 4-phosphate. This is the penultimate step in the biosynthesis of riboflavin. This is 6,7-dimethyl-8-ribityllumazine synthase from Clostridium botulinum (strain 657 / Type Ba4).